An 88-amino-acid chain; its full sequence is N-alpha-acetyltransferase 38, NatC auxiliary subunit (88 aa).

Residues 1 to 72 (MDILKLSDFI…VKTIMIDKPV (72 aa)) enclose the Sm domain.

As to quaternary structure, component of the N-terminal acetyltransferase C (NatC) complex, composed of the catalytic subunit Naa30/MAK3, a large auxiliary subunit Naa35/MAK10 and a small auxiliary subunit Naa38/MAK31.

Component of the NatC N-terminal acetyltransferase, which associates with the ribosome to acetylate nascent protein chains in a cotranslational manner. NatC acetylates protein N-termini starting with methionine, followed by a hydrophobic or amphipathic amino acid, with amino acids at positions 3 and 4 also contributing to NatC recognition. The first 4 amino acids of cognate substrates are recognized at the Naa30/MAK3-Naa35/MAK10 interface. NatC-dependent acetylation targets various substrate proteins to specific subcellular sites, including isoform 2 of tRNA-specific methyltransferase Trm1 to the inner nuclear membrane. Catalyzes the acetylation of the N-terminal Met of ARF-like GTPase ARL3, which is required for its Golgi localization via interaction with the Golgi-localized integral membrane protein SYS1, which may serve as a receptor for acetylated ARL3. Catalyzes the acetylation of the N-terminal Met of L-A virus Gag protein. MAK31 is necessary for the structural stability of L-A double-stranded RNA-containing particles. Necessary for growth at 37 degrees Celsius as well as for maintenance of the killer plasmid. This chain is N-alpha-acetyltransferase 38, NatC auxiliary subunit (MAK31), found in Saccharomyces cerevisiae (strain ATCC 204508 / S288c) (Baker's yeast).